The chain runs to 443 residues: Tubulin beta-2 chain (443 aa).

The MREI motif motif lies at 1 to 4 (MREI). Residues Q11, E69, S138, G142, T143, G144, N204, and N226 each contribute to the GTP site. E69 lines the Mg(2+) pocket. 5-glutamyl polyglutamate is present on E438.

The protein belongs to the tubulin family. As to quaternary structure, dimer of alpha and beta chains. A typical microtubule is a hollow water-filled tube with an outer diameter of 25 nm and an inner diameter of 15 nM. Alpha-beta heterodimers associate head-to-tail to form protofilaments running lengthwise along the microtubule wall with the beta-tubulin subunit facing the microtubule plus end conferring a structural polarity. Microtubules usually have 13 protofilaments but different protofilament numbers can be found in some organisms and specialized cells. It depends on Mg(2+) as a cofactor. In terms of processing, some glutamate residues at the C-terminus are polyglycylated, resulting in polyglycine chains on the gamma-carboxyl group. Glycylation is mainly limited to tubulin incorporated into axonemes (cilia and flagella) whereas glutamylation is prevalent in neuronal cells, centrioles, axonemes, and the mitotic spindle. Both modifications can coexist on the same protein on adjacent residues, and lowering polyglycylation levels increases polyglutamylation, and reciprocally. The precise function of polyglycylation is still unclear. Some glutamate residues at the C-terminus are polyglutamylated, resulting in polyglutamate chains on the gamma-carboxyl group. Polyglutamylation plays a key role in microtubule severing by spastin (SPAST). SPAST preferentially recognizes and acts on microtubules decorated with short polyglutamate tails: severing activity by SPAST increases as the number of glutamates per tubulin rises from one to eight, but decreases beyond this glutamylation threshold. As to expression, nervous system specific.

The protein resides in the cytoplasm. It is found in the cytoskeleton. Tubulin is the major constituent of microtubules, a cylinder consisting of laterally associated linear protofilaments composed of alpha- and beta-tubulin heterodimers. Microtubules grow by the addition of GTP-tubulin dimers to the microtubule end, where a stabilizing cap forms. Below the cap, tubulin dimers are in GDP-bound state, owing to GTPase activity of alpha-tubulin. This is Tubulin beta-2 chain (tubb2) from Xenopus laevis (African clawed frog).